A 240-amino-acid polypeptide reads, in one-letter code: Zein-alpha 19C2 (240 aa).

Residues 1–21 form the signal peptide; it reads MATKIFSLLMLLALSTCVANA.

Belongs to the zein family. Interacts with OP10 (via N-terminus).

Its function is as follows. Zeins are major seed storage proteins. This chain is Zein-alpha 19C2, found in Zea mays (Maize).